A 614-amino-acid chain; its full sequence is Probable zinc transporter protein DDB_G0269332 (614 aa).

Disordered stretches follow at residues 1–103 (MSDI…LPHL) and 115–178 (SSYN…NNEF). The Cytoplasmic segment spans residues 1 to 203 (MSDINSNSYD…NLNRDSDAKK (203 aa)). Over residues 17 to 64 (QHQQESQYHPQQQQQQQQQQQQQQEYYNQQHQQESQYQQQSPPQQQYD) the composition is skewed to low complexity. Residues 80–92 (GHGRSHNSGHGHS) show a composition bias toward basic residues. Residues 121–176 (NNSGDISNSNNNNNNNNQYNYNNNNNNNNYNNNINNNQFNSSVYNNNNNNNNNNNN) are compositionally biased toward low complexity. Residues 204 to 224 (LAAWISVMLVFTIYEIFYGAY) traverse the membrane as a helical segment. Residues 225–233 (LESLGLVSD) are Extracellular-facing. Residues 234-254 (GFHALFDCIGMGIALLAMLVG) traverse the membrane as a helical segment. Topologically, residues 255 to 270 (KRGISNQEYTYGYDRW) are cytoplasmic. A helical membrane pass occupies residues 271 to 291 (EVLGTFSNGCFLLFVSFFLFL). At 292 to 306 (ESIERLLEPPHIHNH) the chain is on the extracellular side. Residues 307 to 327 (GRVMSLATISLIINIVGVLFF) form a helical membrane-spanning segment. Residues 328–351 (KQKSNERKQQSSIRSENLLTISHH) are Cytoplasmic-facing. The chain crosses the membrane as a helical span at residues 352–372 (ILVDSCTSLGVILSSLVGQAF). Residues 373–377 (GLEIS) lie on the Extracellular side of the membrane. Residues 378-398 (DSLISIIIACIIVYNALPICI) traverse the membrane as a helical segment. Topologically, residues 399-614 (KTSAILLQTT…NSSHSHAHNH (216 aa)) are cytoplasmic. A disordered region spans residues 483 to 614 (EGKHNSHSHG…NSSHSHAHNH (132 aa)). Basic residues-rich tracts occupy residues 487 to 499 (NSHS…HHPH) and 507 to 523 (SHNH…HGHS). The span at 525–535 (GGNDDHEHGEN) shows a compositional bias: basic and acidic residues. Over residues 548-567 (VQPTSPFSSHYTDIHSNNTP) the composition is skewed to polar residues. Over residues 575-585 (QDDEDDEDDYD) the composition is skewed to acidic residues. Over residues 586 to 599 (HDEHHHDHDHDEHH) the composition is skewed to basic and acidic residues. Residues 600 to 614 (HGHSHNSSHSHAHNH) show a composition bias toward basic residues.

The protein belongs to the cation diffusion facilitator (CDF) transporter (TC 2.A.4) family. SLC30A subfamily.

The protein localises to the membrane. In terms of biological role, may be involved in zinc transport from the cytoplasm to either intracellular organelles or extracellular spaces. This Dictyostelium discoideum (Social amoeba) protein is Probable zinc transporter protein DDB_G0269332.